Reading from the N-terminus, the 55-residue chain is Large ribosomal subunit protein bL33 (55 aa).

It belongs to the bacterial ribosomal protein bL33 family.

This chain is Large ribosomal subunit protein bL33, found in Deinococcus deserti (strain DSM 17065 / CIP 109153 / LMG 22923 / VCD115).